The chain runs to 758 residues: MSPSVASPKTLYDKVWDSHVVDLQEDGTCLLYIDRHLIHEVTSPQAFEGLRTAGRKVRHPELALATVDHNIPTDPRKDMKDIASFIHQPDSRTQVLALENNIKEFGLTYYGMNDRRQGIVHVIGPEQGFTLPGTTLVCGDSHTSTHGAFGALAFGIGTSEVEHVLATQTILQRKSKNMRIRVNGKLPEGIASKDLILHIIGVIGTAGGTGSVIEFCGEAIEGLSMEARMSMCNMSIEAGARAGMIAPDATTFEYVKNRPLAPKGDDWEQAVAYWKTLRSDENAKYDIEVEINAADVLPTVTWGTSPQDVIPINGNIPDPAHVKDNVRAASIQRSLEYMGLKPNTSIVSYPIDKVFIGSCTNSRIEDLRLAAAVVKGRKVAANVKDAMIVPGSGLVKKMAEAEGLDQIFIEAGFDWREAGCSMCLGMNPDQLKPYERCASTSNRNFEGRQGAKGRTHLVSPAMAAAAAIKGHLCNVREFFGDVSNGSPSIITNKNYDPSHDVEGDIGLSVDDATDAVTDADGIATNVAGSVSSGSAGIPKFTVVEGIAAPLPMANVDTDKIIPKQFLKTIKRTGLGQFAFYEIRYDADGKEIPDFVLNREPYRHATVLVAHDNFGCGSSREHAPWALNDFGIRVIIAPSFADIFFNNCFKNGMLPIPTPIEQVNDMMKAAENQVKFSVDLVNQTITYGDKQVKFDVEPFRKHCLVNGLDDIGLTLQKETMIDAFEAAREENFPWMNIKRSRARLSPVKSNKQSSSRNDW.

[4Fe-4S] cluster contacts are provided by Cys-359, Cys-420, and Cys-423. Phosphoserine occurs at positions 486 and 488.

Belongs to the aconitase/IPM isomerase family. It depends on [4Fe-4S] cluster as a cofactor.

It carries out the reaction (2R,3S)-3-isopropylmalate = (2S)-2-isopropylmalate. Its pathway is amino-acid biosynthesis; L-leucine biosynthesis; L-leucine from 3-methyl-2-oxobutanoate: step 2/4. Functionally, catalyzes the isomerization between 2-isopropylmalate and 3-isopropylmalate, via the formation of 2-isopropylmaleate. The chain is 3-isopropylmalate dehydratase (leu2) from Schizosaccharomyces pombe (strain 972 / ATCC 24843) (Fission yeast).